Reading from the N-terminus, the 490-residue chain is GTPase Der (490 aa).

2 EngA-type G domains span residues 3 to 166 (PVVA…MDDV) and 203 to 376 (IKLA…DSST). GTP-binding positions include 9–16 (GRPNVGKS), 56–60 (DTGGI), 118–121 (NKTD), 209–216 (GRPNVGKS), 256–260 (DTAGV), and 321–324 (NKWD). One can recognise a KH-like domain in the interval 377-461 (RRVSTAMLTR…PIRIQFKEGE (85 aa)).

This sequence belongs to the TRAFAC class TrmE-Era-EngA-EngB-Septin-like GTPase superfamily. EngA (Der) GTPase family. In terms of assembly, associates with the 50S ribosomal subunit.

GTPase that plays an essential role in the late steps of ribosome biogenesis. The polypeptide is GTPase Der (Salmonella newport (strain SL254)).